The sequence spans 762 residues: Palmitoyltransferase ZDHHC8 (762 aa).

Residues 1–13 (MPRSPGTRLKPAK) are Cytoplasmic-facing. Residues 14-34 (YIPVATAAALLVGSSTLFFVF) form a helical membrane-spanning segment. Over 35–52 (TCPWLTRAVSPAIPVYNG) the chain is Lumenal. The chain crosses the membrane as a helical span at residues 53 to 73 (ILFLFVLANFSMATFMDPGVF). Over 74-148 (PRADEDEDKE…NCIGRRNYRY (75 aa)) the chain is Cytoplasmic. The 51-residue stretch at 104–154 (KWCATCHFYRPPRCSHCSVCDNCVEDFDHHCPWVNNCIGRRNYRYFFLFLL) folds into the DHHC domain. Catalysis depends on cysteine 134, which acts as the S-palmitoyl cysteine intermediate. Residues 149-169 (FFLFLLSLSAHMVGVVAFGLL) traverse the membrane as a helical segment. The Lumenal segment spans residues 170–190 (YVLNHSEGLGAAHTTITMAVM). A helical transmembrane segment spans residues 191–211 (CVAGLFFIPVIGLTGFHVVLV). At 212 to 762 (TRGRTTNEQV…VGGTTYEISV (551 aa)) the chain is on the cytoplasmic side. 4 disordered regions span residues 289 to 350 (GLKA…PPTP), 362 to 423 (GPKT…TTDA), 436 to 537 (ASRR…SPVR), and 551 to 574 (ERKD…GDSG). A Phosphoserine modification is found at serine 335. Residues 408–417 (LRPPYPPSPP) show a composition bias toward pro residues. An Omega-N-methylarginine modification is found at arginine 439. A compositionally biased stretch (polar residues) spans 471–485 (RNGSLSYDSLLNPGS). A compositionally biased stretch (pro residues) spans 511–521 (PSDPPRPPPRS). Basic and acidic residues predominate over residues 551–562 (ERKDREERERLL). A phosphoserine mark is found at serine 603 and serine 624. Low complexity predominate over residues 626-644 (SSLSSSMSRAPRTSSSSLQ). Disordered regions lie at residues 626 to 684 (SSLS…SYTG) and 707 to 744 (DHPQ…PARH). Serine 672, serine 679, serine 722, and serine 740 each carry phosphoserine.

It belongs to the DHHC palmitoyltransferase family. ERF2/ZDHHC9 subfamily. As to expression, expressed in brain cortex and hippocampus.

The protein localises to the golgi apparatus membrane. It localises to the mitochondrion membrane. It catalyses the reaction L-cysteinyl-[protein] + hexadecanoyl-CoA = S-hexadecanoyl-L-cysteinyl-[protein] + CoA. In terms of biological role, palmitoyltransferase that catalyzes the addition of palmitate onto various protein substrates and therefore functions in several unrelated biological processes. Through the palmitoylation of ABCA1 regulates the localization of the transporter to the plasma membrane and thereby regulates its function in cholesterol and phospholipid efflux. Could also pamitoylate the D(2) dopamine receptor DRD2 and regulate its stability and localization to the plasma membrane. Could also play a role in glutamatergic transmission. This chain is Palmitoyltransferase ZDHHC8, found in Mus musculus (Mouse).